A 274-amino-acid chain; its full sequence is Trehalose transport system permease protein SugB (274 aa).

6 consecutive transmembrane segments (helical) span residues 8–28 (YWAVLDTLVVGYALLPVLWIF), 70–90 (IGIGLITTVIAVVLGAMAAYA), 102–122 (LIGAALLITMFPSISLVTPLF), 137–157 (LILPYITFALPLAIYTLSAFF), 182–202 (VIVPLAAPGLVTAAILVFIFA), and 239–259 (GSIAAGAIVITIPIIVFVLIF). The ABC transmembrane type-1 domain maps to 66 to 259 (LINSIGIGLI…IPIIVFVLIF (194 aa)).

Belongs to the binding-protein-dependent transport system permease family. As to quaternary structure, the complex is composed of two ATP-binding proteins (SugC), two transmembrane proteins (Suga and SugB) and a solute-binding protein (LpqY).

It localises to the cell inner membrane. In terms of biological role, part of the ABC transporter complex LpqY-SugA-SugB-SugC, which is highly specific for uptake of trehalose. Involved in the recycling of extracellular trehalose released from trehalose-containing molecules synthesized by M.tuberculosis. Trehalose uptake is essential for virulence. Probably responsible for the translocation of the substrate across the membrane. The polypeptide is Trehalose transport system permease protein SugB (sugB) (Mycobacterium tuberculosis (strain CDC 1551 / Oshkosh)).